The primary structure comprises 277 residues: Pantothenate synthetase (277 aa).

M26–H33 is an ATP binding site. The Proton donor role is filled by H33. Q57 serves as a coordination point for (R)-pantoate. Position 57 (Q57) interacts with beta-alanine. Position 144 to 147 (G144 to D147) interacts with ATP. Q150 provides a ligand contact to (R)-pantoate. Residues V173 and L181–R184 contribute to the ATP site.

Belongs to the pantothenate synthetase family. In terms of assembly, homodimer.

It localises to the cytoplasm. It catalyses the reaction (R)-pantoate + beta-alanine + ATP = (R)-pantothenate + AMP + diphosphate + H(+). Its pathway is cofactor biosynthesis; (R)-pantothenate biosynthesis; (R)-pantothenate from (R)-pantoate and beta-alanine: step 1/1. Catalyzes the condensation of pantoate with beta-alanine in an ATP-dependent reaction via a pantoyl-adenylate intermediate. The sequence is that of Pantothenate synthetase from Paraburkholderia phymatum (strain DSM 17167 / CIP 108236 / LMG 21445 / STM815) (Burkholderia phymatum).